We begin with the raw amino-acid sequence, 614 residues long: Dihydroxy-acid dehydratase 1 (614 aa).

Mg(2+) is bound at residue D81. C122 contributes to the [2Fe-2S] cluster binding site. Positions 123 and 124 each coordinate Mg(2+). At K124 the chain carries N6-carboxylysine. [2Fe-2S] cluster is bound at residue C195. A Mg(2+)-binding site is contributed by E491. The active-site Proton acceptor is the S517.

Belongs to the IlvD/Edd family. Homodimer. [2Fe-2S] cluster is required as a cofactor. The cofactor is Mg(2+).

The catalysed reaction is (2R)-2,3-dihydroxy-3-methylbutanoate = 3-methyl-2-oxobutanoate + H2O. It catalyses the reaction (2R,3R)-2,3-dihydroxy-3-methylpentanoate = (S)-3-methyl-2-oxopentanoate + H2O. It participates in amino-acid biosynthesis; L-isoleucine biosynthesis; L-isoleucine from 2-oxobutanoate: step 3/4. The protein operates within amino-acid biosynthesis; L-valine biosynthesis; L-valine from pyruvate: step 3/4. In terms of biological role, functions in the biosynthesis of branched-chain amino acids. Catalyzes the dehydration of (2R,3R)-2,3-dihydroxy-3-methylpentanoate (2,3-dihydroxy-3-methylvalerate) into 2-oxo-3-methylpentanoate (2-oxo-3-methylvalerate) and of (2R)-2,3-dihydroxy-3-methylbutanoate (2,3-dihydroxyisovalerate) into 2-oxo-3-methylbutanoate (2-oxoisovalerate), the penultimate precursor to L-isoleucine and L-valine, respectively. This is Dihydroxy-acid dehydratase 1 from Mesorhizobium japonicum (strain LMG 29417 / CECT 9101 / MAFF 303099) (Mesorhizobium loti (strain MAFF 303099)).